The chain runs to 270 residues: Coiled-coil domain-containing protein 3 (270 aa).

Residues 1 to 21 (MLRQLLLAALCLAGPPAPARA) form the signal peptide. Residue Asn100 is glycosylated (N-linked (GlcNAc...) asparagine). The stretch at 188–251 (SVQKALFEEE…NQKLSEKLAA (64 aa)) forms a coiled coil.

In terms of assembly, homodimer. As to expression, expressed in umbilical vein endothelial cells (HUVEC), and at lower levels in aortic smooth muscle cells (HASMC).

The protein resides in the secreted. Its function is as follows. Negatively regulates TNF-alpha-induced pro-inflammatory response in endothelial cells (ECs) via inhibition of TNF-alpha-induced NF-kappaB activation in ECs. Positively regulates lipid accumulation in adipose cells. The polypeptide is Coiled-coil domain-containing protein 3 (CCDC3) (Homo sapiens (Human)).